The sequence spans 820 residues: Chitinase A (820 aa).

The N-terminal stretch at 1-21 (MKLNKITSYIGFALLSGGALA) is a signal peptide. In terms of domain architecture, GH18 spans 158-588 (RVTGAYFVEW…NAMYDGLTAG (431 aa)). Catalysis depends on glutamate 313, which acts as the Proton donor.

The protein belongs to the glycosyl hydrolase 18 family. Chitinase class II subfamily.

It catalyses the reaction Random endo-hydrolysis of N-acetyl-beta-D-glucosaminide (1-&gt;4)-beta-linkages in chitin and chitodextrins.. With respect to regulation, stimulated by magnesium ions; inhibited by N-bromosuccinimide and 2-hydroxy-5-nitrobenzyl bromide. This is Chitinase A (chiA) from Pseudoalteromonas piscicida.